The chain runs to 162 residues: Transcription elongation factor GreA (162 aa).

The stretch at 45–74 forms a coiled coil; sequence ENAEYEAAREKQAFIEGRIKELEDMTARAE.

The protein belongs to the GreA/GreB family.

Its function is as follows. Necessary for efficient RNA polymerase transcription elongation past template-encoded arresting sites. The arresting sites in DNA have the property of trapping a certain fraction of elongating RNA polymerases that pass through, resulting in locked ternary complexes. Cleavage of the nascent transcript by cleavage factors such as GreA or GreB allows the resumption of elongation from the new 3'terminus. GreA releases sequences of 2 to 3 nucleotides. The sequence is that of Transcription elongation factor GreA from Rickettsia typhi (strain ATCC VR-144 / Wilmington).